Reading from the N-terminus, the 400-residue chain is Large envelope protein (400 aa).

At Met1 the chain carries N-acetylmethionine. Gly2 is lipidated: N-myristoyl glycine; by host. A pre-S1 region spans residues 2–119 (GAPLSTARRG…PPLRDTHPQA (118 aa)). A pre-S region spans residues 2–174 (GAPLSTARRG…FSKTGDPAMN (173 aa)). The Virion surface; in external conformation segment spans residues 2–181 (GAPLSTARRG…AMNMENITSG (180 aa)). The Intravirion; in internal conformation portion of the chain corresponds to 2-253 (GAPLSTARRG…PGYRWMCLRR (252 aa)). A glycan (N-linked (GlcNAc...) asparagine) is linked at Pro4. A disordered region spans residues 70–115 (PHGGLLGWSPQAQGILTTSPPDPPPASTNRRSGRKPTPVSPPLRDT). The span at 79-88 (PQAQGILTTS) shows a compositional bias: polar residues. The segment at 120–174 (MQWNSTQFHQALLDPRVRGLYFPAGGSSSETQNPAPTIASLTSSIFSKTGDPAMN) is pre-S2. Residues 182 to 202 (LLRPLLVLQAVCFLLTKILTI) traverse the membrane as a helical segment. The Intravirion; in external conformation segment spans residues 203–253 (PQSLDSWWTSLNFLGVPPGCPGQNSQSPISNHLPTSCPPTCPGYRWMCLRR). The chain crosses the membrane as a helical span at residues 254 to 274 (FIIFLFILLLCLIFLLVLLDY). At 275–348 (QGMLPVCPLL…WASARFSWLS (74 aa)) the chain is on the virion surface side. An N-linked (GlcNAc...) asparagine; by host glycan is attached at Asn320. Residues 349-369 (LLVQFVQWCVGLSPTVWLLVI) form a helical membrane-spanning segment. At 370–375 (WMIWYW) the chain is on the intravirion side. The chain crosses the membrane as a helical span at residues 376 to 398 (GPNLCSILSPFIPLLPIFCYLWA). The Virion surface segment spans residues 399 to 400 (SI).

It belongs to the orthohepadnavirus major surface antigen family. In its internal form (Li-HBsAg), interacts with the capsid protein and with the isoform S. Interacts with host chaperone CANX. In terms of assembly, associates with host chaperone CANX through its pre-S2 N glycan; this association may be essential for isoform M proper secretion. As to quaternary structure, interacts with isoform L. Interacts with the antigens of satellite virus HDV (HDVAgs); this interaction is required for encapsidation of HDV genomic RNA. In terms of processing, isoform M is N-terminally acetylated by host at a ratio of 90%, and N-glycosylated by host at the pre-S2 region. Myristoylated.

The protein localises to the virion membrane. Its function is as follows. The large envelope protein exists in two topological conformations, one which is termed 'external' or Le-HBsAg and the other 'internal' or Li-HBsAg. In its external conformation the protein attaches the virus to cell receptors and thereby initiating infection. This interaction determines the species specificity and liver tropism. This attachment induces virion internalization predominantly through caveolin-mediated endocytosis. The large envelope protein also assures fusion between virion membrane and endosomal membrane. In its internal conformation the protein plays a role in virion morphogenesis and mediates the contact with the nucleocapsid like a matrix protein. Functionally, the middle envelope protein plays an important role in the budding of the virion. It is involved in the induction of budding in a nucleocapsid independent way. In this process the majority of envelope proteins bud to form subviral lipoprotein particles of 22 nm of diameter that do not contain a nucleocapsid. The polypeptide is Large envelope protein (Hepatitis B virus genotype H (isolate United States/LAS2523/2002) (HBV-H)).